Consider the following 408-residue polypeptide: Putative ankyrin repeat protein L483 (408 aa).

ANK repeat units lie at residues 78-107 (SLNK…DIKA), 108-137 (GDDC…NIRA), 139-167 (NDYA…DIRA), 168-197 (NNDY…NIRT), 198-227 (ENDY…DIRA), 229-257 (NDYA…NIRV), 259-287 (NDYA…NIRA), 288-317 (RCDF…DIRS), 318-347 (QNDY…DIRT), 349-377 (DDYA…NIRA), and 378-407 (KDDY…VLTK).

This chain is Putative ankyrin repeat protein L483, found in Acanthamoeba polyphaga (Amoeba).